Consider the following 145-residue polypeptide: 3-hydroxyacyl-[acyl-carrier-protein] dehydratase FabZ (145 aa).

H47 is a catalytic residue.

The protein belongs to the thioester dehydratase family. FabZ subfamily.

It is found in the cytoplasm. It catalyses the reaction a (3R)-hydroxyacyl-[ACP] = a (2E)-enoyl-[ACP] + H2O. Its function is as follows. Involved in unsaturated fatty acids biosynthesis. Catalyzes the dehydration of short chain beta-hydroxyacyl-ACPs and long chain saturated and unsaturated beta-hydroxyacyl-ACPs. The polypeptide is 3-hydroxyacyl-[acyl-carrier-protein] dehydratase FabZ (Polaromonas naphthalenivorans (strain CJ2)).